The sequence spans 138 residues: MRTLWIVAVCLMGVEGHLTQFGDMINKKTGTFGLLSYVYYGCYCGLGGKGKPQDATDRCCFVHDCCYGTVNGCDPKLSTYSYSFQNGDIVCGDDDPCLRAVCECDRVAAICFGENMNTYDTKYMLHSLFDCMEESEKC.

Positions 1–16 (MRTLWIVAVCLMGVEG) are cleaved as a signal peptide. Disulfide bonds link C42–C131, C44–C60, C59–C111, C65–C138, C66–C104, C73–C97, and C91–C102. The Ca(2+) site is built by Y43, G45, and G47. H63 is an active-site residue. D64 is a Ca(2+) binding site. D105 is a catalytic residue.

Belongs to the phospholipase A2 family. Group II subfamily. D49 sub-subfamily. In terms of assembly, does not form a complex. It depends on Ca(2+) as a cofactor. In terms of tissue distribution, expressed by the venom gland.

Its subcellular location is the secreted. It catalyses the reaction a 1,2-diacyl-sn-glycero-3-phosphocholine + H2O = a 1-acyl-sn-glycero-3-phosphocholine + a fatty acid + H(+). Its function is as follows. Snake venom phospholipase A2 (PLA2) that is not toxic by itself, but the synergistical mixture of a basic and this acidic protein is lethal. PLA2 catalyzes the calcium-dependent hydrolysis of the 2-acyl groups in 3-sn-phosphoglycerides. The sequence is that of Acidic phospholipase A2 VP7 from Daboia palaestinae (Palestine viper).